We begin with the raw amino-acid sequence, 449 residues long: MTTVRFDYSKALQFVGQHEVDYMADTVKTLHGAIHNGTGAGSDFLGWVDLPTNYDKAEFEKIQAAAEKIKSDSDVLLVVGIGGSYLGARAAIEMLGHSFHNLLSKEERKAPQIIYAGHNISSTYLHDLFQVLEGKDVSVNIISKSGTTTEPAISFRLLKTFMEDKYGKAGAKDRIYATTDKARGALKTLADSEGYQTFVIPDDVGGRFSVLTPVGLLPIAAAGISIEELMAGARDAQVQFSNENLAENEAYQYAVVRNALYAKGKTIELLVNYEPALHYVSEWWKQLYGESEGKDFKGIFPAAVDFSTDLHSMGQYVQEGRRDLFETVIKVGQARHALTIEKDAQDLDGLNFLEGKSIQFVNDKAAEGTLLAHTDGQVPNLTVELPEMTPYHLGFLFYFFEKACAMSGYLLGVNPFDQPGVEAYKKNMFALLGKPGFEAEKAELEARLK.

The active-site Proton donor is Glu290. Active-site residues include His311 and Lys425.

Belongs to the GPI family.

Its subcellular location is the cytoplasm. It catalyses the reaction alpha-D-glucose 6-phosphate = beta-D-fructose 6-phosphate. Its pathway is carbohydrate biosynthesis; gluconeogenesis. The protein operates within carbohydrate degradation; glycolysis; D-glyceraldehyde 3-phosphate and glycerone phosphate from D-glucose: step 2/4. In terms of biological role, catalyzes the reversible isomerization of glucose-6-phosphate to fructose-6-phosphate. The chain is Glucose-6-phosphate isomerase from Exiguobacterium sibiricum (strain DSM 17290 / CCUG 55495 / CIP 109462 / JCM 13490 / 255-15).